Here is a 297-residue protein sequence, read N- to C-terminus: Heterogeneous nuclear ribonucleoprotein D-like (297 aa).

A disordered region spans residues 1–21; that stretch reads MTGFGATPDFNEGSKINASKN. RRM domains lie at 26–108 and 111–190; these read GKMF…KGKE and KKVF…QPKE. A disordered region spans residues 192–224; sequence YRQQQQKQQKGGRGAATGRGGARGRGRGQGWNQ. A compositionally biased stretch (gly residues) spans 202–222; the sequence is GGRGAATGRGGARGRGRGQGW.

The protein localises to the nucleus. It is found in the cytoplasm. Functionally, acts as a transcriptional regulator. Binds DNA and RNA. This is Heterogeneous nuclear ribonucleoprotein D-like (hnrnpdl) from Xenopus tropicalis (Western clawed frog).